A 599-amino-acid chain; its full sequence is METENKYDNAVVKVDCDKKFSLNKLRICFCIDTSNSTKSLFVQTKEWGMTYLDVEKLFVMKMAEKLSYPESVTYIGWNKEACQVDCIKNLVQQRGTNPSCLFENDTSYHIVSNSDIVFLITDGIISNEDVNMFHQHMKSRGIQLKAIIGVIVGRRTNTNETYFQIKPADINVSVIAPATIANSCILFYNMKTVYVVWASGDFENILQPNSITKETLWSDVTTTSFKDLSEISLTFPNDKIHNSLIKNEYIHLGKGNYFNPVKLLVSKPTFHELIEYPFSQICQYFKITQSYDKLYLWFKNLCKEKLEILCQQSLCSIKNMIVKSSDNTFQFCNPYYKPLFIIERNKLFVYKYILNNAINFNLKSLLFNSEERSIMEFIRGIYGTMQEDMISSNVDSDYLAMNISRDRYKSFTKKTSTEYDYFKNNKSISKNEILFDNNNFKDVILWINLFNNNLHESVKPNENCSLCGDQGIGCVVIKKFLNLSNDEIIDNPVDHIYPKILCEKCAVCFCNYQIDTAKYYAAIPIVKPREEINHLIMNMIMCLMNGFFIKYFASMNDKVLSLFSTIIESLVGRNISTFDMINDTNCDDVNDHDGIHMQE.

This is an uncharacterized protein from Acanthamoeba polyphaga (Amoeba).